The chain runs to 526 residues: Flavonoid 3'-monooxygenase CYP75B3 (526 aa).

A helical transmembrane segment spans residues 6–26 (LPLLLGSLAVSAAVWYLVYFL). Cys461 is a heme binding site.

It belongs to the cytochrome P450 family. Heme serves as cofactor.

It is found in the membrane. The catalysed reaction is a 3'-unsubstituted flavone + reduced [NADPH--hemoprotein reductase] + O2 = a 3'-hydroxyflavone + oxidized [NADPH--hemoprotein reductase] + H2O + H(+). Its pathway is secondary metabolite biosynthesis; flavonoid biosynthesis. Catalyzes the 3'-hydroxylation of the flavonoid B-ring to the 3',4'-hydroxylated state. Catalyzes the 3'-hydroxylation of apigenin to generate luteolin. The sequence is that of Flavonoid 3'-monooxygenase CYP75B3 from Oryza sativa subsp. japonica (Rice).